The following is a 30-amino-acid chain: Snake venom serine protease (30 aa).

The Peptidase S1 domain maps to 1–30 (VIGGDECNINEHRFLVALYDPDGFLSGGIL).

This sequence belongs to the peptidase S1 family. Snake venom subfamily. As to quaternary structure, monomer. In terms of processing, N-Glycosylated. In terms of tissue distribution, expressed by the venom gland.

The protein localises to the secreted. Its activity is regulated as follows. Inhibited by diisopropylfluorophosphate (DFP). Its function is as follows. Snake venom serine protease that catalyzes the hydrolysis of arginine esters, kallikrein substrates Pro-Phe-Arg-MCA and Z-Phe-Arg-MCA. Cleaves kininogen analogs to release bradykinin. Induces contraction of the isolated rat uterus directly at high concentrations, but provokes more forceful contractions when injected in presence of bovine plasma. Shows capillary permeability-increasing activity and hypotensive activity on the anesthetized rat. This chain is Snake venom serine protease, found in Crotalus viridis viridis (Prairie rattlesnake).